A 546-amino-acid polypeptide reads, in one-letter code: Amidophosphoribosyltransferase (546 aa).

The span at 1–26 (MSAPQQQQQSQQKQQQHVRVVEQQQV) shows a compositional bias: low complexity. The disordered stretch occupies residues 1–39 (MSAPQQQQQSQQKQQQHVRVVEQQQVEPAEAVTSSMESE). Positions 1–53 (MSAPQQQQQSQQKQQQHVRVVEQQQVEPAEAVTSSMESESISASKELTGLTHE) are excised as a propeptide. The Nucleophile role is filled by C54. The Glutamine amidotransferase type-2 domain occupies 54 to 302 (CGVFGAIACG…PGEIVELSRS (249 aa)). Residue S113 is modified to Phosphoserine. The residue at position 114 (T114) is a Phosphothreonine. A Phosphoserine modification is found at S120. Position 321 (C321) interacts with [4Fe-4S] cluster. S368, D430, and D431 together coordinate Mg(2+). Residues C467, C528, and C531 each coordinate [4Fe-4S] cluster.

This sequence in the C-terminal section; belongs to the purine/pyrimidine phosphoribosyltransferase family. Mg(2+) serves as cofactor. The cofactor is [4Fe-4S] cluster.

It catalyses the reaction 5-phospho-beta-D-ribosylamine + L-glutamate + diphosphate = 5-phospho-alpha-D-ribose 1-diphosphate + L-glutamine + H2O. It functions in the pathway purine metabolism; IMP biosynthesis via de novo pathway; N(1)-(5-phospho-D-ribosyl)glycinamide from 5-phospho-alpha-D-ribose 1-diphosphate: step 1/2. Functionally, involved in the first step (and regulatory point) of the de novo biosynthesis of purine nucleotides, where it catalyzes the transfer of glutamine amide to 5-phospho-alpha-D-ribose 1-diphosphate. This is Amidophosphoribosyltransferase (Prat) from Drosophila melanogaster (Fruit fly).